The primary structure comprises 92 residues: Large ribosomal subunit protein bL34m (92 aa).

The transit peptide at 1–46 directs the protein to the mitochondrion; it reads MALLAGSLLGPTSRSAALLGGRWLQPRAWLGFPDAWGLPTPQQARG. Residues 40-57 show a composition bias toward polar residues; the sequence is TPQQARGKSRGNEYQPSN. The interval 40 to 63 is disordered; the sequence is TPQQARGKSRGNEYQPSNIKRKNK. Ser-71 carries the post-translational modification Phosphoserine.

The protein belongs to the bacterial ribosomal protein bL34 family. As to quaternary structure, component of the mitochondrial ribosome large subunit (39S) which comprises a 16S rRNA and about 50 distinct proteins.

The protein localises to the mitochondrion. This Macaca fascicularis (Crab-eating macaque) protein is Large ribosomal subunit protein bL34m (MRPL34).